Reading from the N-terminus, the 208-residue chain is dTTP/UTP pyrophosphatase (208 aa).

The disordered stretch occupies residues 28–48 (DRIHPADIDETPQRAEHPRSL). The active-site Proton acceptor is aspartate 79.

Belongs to the Maf family. YhdE subfamily. A divalent metal cation serves as cofactor.

The protein resides in the cytoplasm. It carries out the reaction dTTP + H2O = dTMP + diphosphate + H(+). The enzyme catalyses UTP + H2O = UMP + diphosphate + H(+). Nucleoside triphosphate pyrophosphatase that hydrolyzes dTTP and UTP. May have a dual role in cell division arrest and in preventing the incorporation of modified nucleotides into cellular nucleic acids. The chain is dTTP/UTP pyrophosphatase from Brucella abortus (strain 2308).